The sequence spans 205 residues: CASP-like protein 2A1 (205 aa).

The segment at 1–25 (MDKSKVSTAVGGETPVGLITGSRDD) is disordered. Residues 1 to 34 (MDKSKVSTAVGGETPVGLITGSRDDELESGSMRT) lie on the Cytoplasmic side of the membrane. A helical membrane pass occupies residues 35-55 (AETVLRLVPMAFCISALVLML). The Extracellular portion of the chain corresponds to 56 to 76 (KNSQTNDFGTLSYSDLGAFRY). The helical transmembrane segment at 77–97 (LVHANGICAGYSLLSAIIVAM) threads the bilayer. Residues 98 to 105 (PRPSTMSR) are Cytoplasmic-facing. A helical membrane pass occupies residues 106-126 (AWTFFFLDQVLTYVILAAAAV). Residues 127–156 (SVEALYLARKGDIAITWSAACVSFGGFCHK) lie on the Extracellular side of the membrane. Residues 157–177 (AITSAVITFIVVVCYALLSLV) traverse the membrane as a helical segment. The Cytoplasmic portion of the chain corresponds to 178-205 (SSYKLFSRYGAPDVSYPGKGIEVAAFHS).

Belongs to the Casparian strip membrane proteins (CASP) family. In terms of assembly, homodimer and heterodimers.

It is found in the cell membrane. The sequence is that of CASP-like protein 2A1 from Ricinus communis (Castor bean).